Reading from the N-terminus, the 79-residue chain is Translational regulator CsrA (79 aa).

The protein belongs to the CsrA/RsmA family. As to quaternary structure, homodimer; the beta-strands of each monomer intercalate to form a hydrophobic core, while the alpha-helices form wings that extend away from the core.

The protein resides in the cytoplasm. Functionally, a translational regulator that binds mRNA to regulate translation initiation and/or mRNA stability. Usually binds in the 5'-UTR at or near the Shine-Dalgarno sequence preventing ribosome-binding, thus repressing translation. Its main target seems to be the major flagellin gene, while its function is anatagonized by FliW. This Maridesulfovibrio salexigens (strain ATCC 14822 / DSM 2638 / NCIMB 8403 / VKM B-1763) (Desulfovibrio salexigens) protein is Translational regulator CsrA.